Reading from the N-terminus, the 455-residue chain is P2X purinoceptor 5 (455 aa).

Topologically, residues 1 to 30 (MGQAAWKGFVLSLFDYKTAKFVVAKSKKVG) are cytoplasmic. A helical transmembrane segment spans residues 31–50 (LLYRVLQLTILLYLLIWVFL). The Extracellular portion of the chain corresponds to 51–339 (IKKSYQDIDT…KFSIIPTVIN (289 aa)). 69 to 71 (KVK) contacts ATP. Residue N77 is glycosylated (N-linked (GlcNAc...) asparagine). Disulfide bonds link C118–C169, C129–C152, and C135–C163. The N-linked (GlcNAc...) asparagine glycan is linked to N157. T189 serves as a coordination point for ATP. N202 is a glycosylation site (N-linked (GlcNAc...) asparagine). 2 cysteine pairs are disulfide-bonded: C220–C229 and C263–C272. ATP-binding positions include 294-296 (NFR) and K314. A helical membrane pass occupies residues 340-362 (IGSGLALMGAGAFFCDLVLIYLI). Over 363-455 (RKSEFYRDKK…PSQILQTVKT (93 aa)) the chain is Cytoplasmic.

Belongs to the P2X receptor family. In terms of assembly, functional P2XRs are organized as homomeric and heteromeric trimers. Homotrimer. Forms heterotrimer with P2RX1. Expressed in a number of tissues, with highest levels detected in heart and kidney.

It is found in the cell membrane. The catalysed reaction is Na(+)(in) = Na(+)(out). It catalyses the reaction Ca(2+)(in) = Ca(2+)(out). It carries out the reaction chloride(in) = chloride(out). With respect to regulation, activated by ATP. Slowly desensitizing. Not activated by ATP agonist alpha/beta-methylene-ATP. Highly sensitive to the antagonists suramin and PPADS. ATP-gated nonselective transmembrane cation channel permeable to potassium, sodium and calcium. Unlike other P2RX receptors, the P2X5 receptor is also permeable to chloride. Acts as an important regulator of inflammatory-related bone loss and osteoclast multinucleation. The protein is P2X purinoceptor 5 of Mus musculus (Mouse).